The sequence spans 892 residues: Dystroglycan 1 (892 aa).

The N-terminal stretch at 1–27 (MRMSAGLSLLLPLWGRTFLLLLSVAMA) is a signal peptide. Over 28–750 (QSHWPSEAGR…SSEDDVYLHT (723 aa)) the chain is Extracellular. The required for laminin recognition stretch occupies residues 30–405 (HWPSEAGRDW…GQIRPTMTIP (376 aa)). Residues 46–68 (SMHSVLSDLHEAVPTVVGIPDGI) form an O-glycosylated at one site region. N-linked (GlcNAc...) asparagine glycosylation occurs at Asn-138. Cys-179 and Cys-261 are joined by a disulfide. The tract at residues 313-482 (ATPTPVTAIG…PPTRIRTTTS (170 aa)) is mucin-like domain. O-linked (Man6P...) threonine glycans are attached at residues Thr-314, Thr-316, and Thr-376. Residues 378–497 (TLGPIQPTRV…GEPNQRPELK (120 aa)) form a disordered region. Residues 410 to 444 (PTAVATPPTTTTKKPRVSTPKPATPSTDSSTTTTR) show a composition bias toward low complexity. The segment at 460-482 (TTKAPITRLETASPPTRIRTTTS) is O-glycosylated at seven sites with GalNAc. The region spanning 600-709 (RAPARFKAKF…SSIAVTGSGS (110 aa)) is the Peptidase S72 domain. Residues Asn-638, Asn-646, and Asn-658 are each glycosylated (N-linked (GlcNAc...) asparagine). The cysteines at positions 666 and 710 are disulfide-linked. The interval 721–742 (PRRVPSEVPSTDVPDRDPEKSS) is disordered. Over residues 733-742 (VPDRDPEKSS) the composition is skewed to basic and acidic residues. A helical membrane pass occupies residues 751-771 (VIPAVVVAAILLIAGIIAMIC). Residues 772–892 (YRKKRKGKLT…YRSPPPYVPP (121 aa)) are Cytoplasmic-facing. The short motif at 773 to 779 (RKKRKGK) is the Nuclear localization signal element. Thr-787 carries the phosphothreonine modification. Residues 816–892 (LQEEKAPLPP…YRSPPPYVPP (77 aa)) are required for interaction with CAV3. Positions 820–892 (KAPLPPPEYP…YRSPPPYVPP (73 aa)) are disordered. A compositionally biased stretch (polar residues) spans 829–843 (PNQSVPETTPLNQDT). Pro residues predominate over residues 856–867 (NAPPYQPPPPFT). The interval 877 to 892 (PKNMTPYRSPPPYVPP) is required for binding DMD and UTRN. A PPXY motif motif is present at residues 886-889 (PPPY). Phosphotyrosine; by SRC is present on Tyr-889.

In terms of assembly, monomer. Heterodimer of alpha- and beta-dystroglycan subunits which are the central components of the dystrophin-glycoprotein complex. This complex then can form a dystrophin-associated glycoprotein complex (DGC) which is composed of three subcomplexes: a cytoplasmic complex comprised of DMD (or UTRN), DTNA and a number of syntrophins, such as SNTB1, SNTB2, SNTG1 and SNTG2, the transmembrane dystroglycan complex, and the sarcoglycan-sarcospan complex. Interacts (via the N-terminal of alphaDAG1) with LARGE1; the interaction enhances laminin binding. Interacts with SGCD. Interacts with AGR2 and AGR3. Interacts (betaDAG1) with DMD; the interaction is inhibited by phosphorylation on the PPXY motif. Interacts (betaDAG1, via its PPXY motif) with UTRN (via its WWW and ZZ domains); the interaction is inhibited by phosphorylation on the PPXY motif. Interacts (betaDAG1, via its phosphorylated PPXY motif) with the SH2 domain-containing proteins, FYN, CSK, NCK and SHC. Interacts (betaDAG1) with CAV3 (via a central WW-like domain); the interaction disrupts the binding of DMD. BetaDAG1 directly interacts with ANK3, but not with ANK2; this interaction does not interfere with DMD-binding and is required for retention at costameres. Identified in a dystroglycan complex that contains at least PRX, DRP2, UTRN, DMD and DAG1. Interacts with POMGNT1. BetaDAG1 interacts with CD93. O-glycosylated. POMGNT1 catalyzes the initial addition of N-acetylglucosamine, giving rise to the GlcNAc(beta1-2)Man(alpha1-)O-Ser/Thr moiety and thus providing the necessary basis for the addition of further carbohydrate moieties. Heavily O-glycosylated comprising of up to two thirds of its mass and the carbohydrate composition differs depending on tissue type. Mucin-type O-glycosylation is important for ligand binding activity. O-mannosylation is found in high abundance in both brain and muscle where the most abundant glycan is Sia-alpha-2-3-Gal-beta-1-4-Glc-NAc-beta-1-2-Man. In muscle, glycosylation on Thr-314, Thr-316 and Thr-376 by a phosphorylated O-mannosyl glycan with the structure 2-(N-acetylamido)-2-deoxygalactosyl-beta-1,3-2-(N-acetylamido)-2-deoxyglucosyl-beta-1,4-6-phosphomannose is mediated by like-acetylglucosaminyltransferase (LARGE1) protein amd is required for laminin binding. O-glycosylated in the N-terminal region with a core 1 or possibly core 8 glycan. The brain form displays a unique glycosylation pattern which is absent in other tissues; this form shows enhanced binding to laminin LAMA5 compared to the skeletal muscle form. Post-translationally, N-glycosylated. In terms of processing, autolytic cleavage produces the alpha and beta subunits. In cutaneous cells, as well as in certain pathological conditions, shedding of beta-dystroglycan can occur releasing a peptide of about 30 kDa. SRC-mediated phosphorylation of the PPXY motif of the beta subunit recruits SH2 domain-containing proteins, but inhibits binding to WWW domain-containing proteins, DMD and UTRN. This phosphorylation also inhibits nuclear entry.

It localises to the secreted. The protein localises to the extracellular space. The protein resides in the cell membrane. It is found in the cytoplasm. Its subcellular location is the cytoskeleton. It localises to the nucleus. The protein localises to the nucleoplasm. The protein resides in the sarcolemma. It is found in the postsynaptic cell membrane. Functionally, the dystroglycan complex is involved in a number of processes including laminin and basement membrane assembly, sarcolemmal stability, cell survival, peripheral nerve myelination, nodal structure, cell migration, and epithelial polarization. Extracellular peripheral glycoprotein that acts as a receptor for extracellular matrix proteins containing laminin-G domains. Receptor for laminin-2 (LAMA2) and agrin in peripheral nerve Schwann cells. Also acts as a receptor for laminin LAMA5. In terms of biological role, transmembrane protein that plays important roles in connecting the extracellular matrix to the cytoskeleton. Acts as a cell adhesion receptor in both muscle and non-muscle tissues. Receptor for both DMD and UTRN and, through these interactions, scaffolds axin to the cytoskeleton. Also functions in cell adhesion-mediated signaling and implicated in cell polarity. In Canis lupus familiaris (Dog), this protein is Dystroglycan 1.